The following is a 521-amino-acid chain: NADH-quinone oxidoreductase subunit N (521 aa).

Transmembrane regions (helical) follow at residues 15–35, 43–63, 98–118, 128–148, 150–170, 185–205, 227–247, 261–281, 303–323, 331–351, 363–383, 406–426, 442–462, and 485–505; these read LAPELILAAMFLILIVTDLIL, IIGWLSLAGLLLSLAAVIWRM, LLKIIFLIGTSLVVLLGLGST, AEFYYLLLPAAAGAMIMASSG, LVTLYIGLELLSITTYVLVGL, VVTGGIASAFVLFGMSYLYGV, ALVYVGFFFLIAGFGIKIAAA, PTPVSAFLAVIAKGAALAAVF, VFFALLVIAAAAMIAGTVSAL, LLALSGVANAGYLLVPIAISV, VFYLVAYLLMNVGAFAVVTVI, AAAMLIFILSFSGLPVTAGFF, WLVAIMVVSTVISYYFYFGII, and TVIWICAAATVALGVLPGPLM.

It belongs to the complex I subunit 2 family. NDH-1 is composed of 14 different subunits. Subunits NuoA, H, J, K, L, M, N constitute the membrane sector of the complex.

It is found in the cell membrane. It carries out the reaction a quinone + NADH + 5 H(+)(in) = a quinol + NAD(+) + 4 H(+)(out). Functionally, NDH-1 shuttles electrons from NADH, via FMN and iron-sulfur (Fe-S) centers, to quinones in the respiratory chain. The immediate electron acceptor for the enzyme in this species is believed to be a menaquinone. Couples the redox reaction to proton translocation (for every two electrons transferred, four hydrogen ions are translocated across the cytoplasmic membrane), and thus conserves the redox energy in a proton gradient. The sequence is that of NADH-quinone oxidoreductase subunit N from Paenibacillus sp. (strain JDR-2).